We begin with the raw amino-acid sequence, 245 residues long: Uridylate kinase (245 aa).

Residue 15–18 coordinates ATP; it reads KLSG. Positions 23–28 are involved in allosteric activation by GTP; sequence GEEGFG. G57 contributes to the UMP binding site. The ATP site is built by G58 and R62. UMP contacts are provided by residues D77 and 138–145; that span reads TGNPFCTT. ATP is bound by residues T165, Y171, and D174.

Belongs to the UMP kinase family. In terms of assembly, homohexamer.

It localises to the cytoplasm. It catalyses the reaction UMP + ATP = UDP + ADP. Its pathway is pyrimidine metabolism; CTP biosynthesis via de novo pathway; UDP from UMP (UMPK route): step 1/1. Its activity is regulated as follows. Allosterically activated by GTP. Inhibited by UTP. Its function is as follows. Catalyzes the reversible phosphorylation of UMP to UDP. This is Uridylate kinase from Shewanella putrefaciens (strain CN-32 / ATCC BAA-453).